The chain runs to 619 residues: 1-deoxy-D-xylulose-5-phosphate synthase (619 aa).

Thiamine diphosphate-binding positions include His-74 and 115-117 (GHS). Asp-146 is a Mg(2+) binding site. Residues 147 to 148 (GA), Asn-175, Tyr-285, and Glu-365 contribute to the thiamine diphosphate site. Asn-175 is a binding site for Mg(2+).

The protein belongs to the transketolase family. DXPS subfamily. Homodimer. Mg(2+) is required as a cofactor. Requires thiamine diphosphate as cofactor.

The enzyme catalyses D-glyceraldehyde 3-phosphate + pyruvate + H(+) = 1-deoxy-D-xylulose 5-phosphate + CO2. Its pathway is metabolic intermediate biosynthesis; 1-deoxy-D-xylulose 5-phosphate biosynthesis; 1-deoxy-D-xylulose 5-phosphate from D-glyceraldehyde 3-phosphate and pyruvate: step 1/1. Functionally, catalyzes the acyloin condensation reaction between C atoms 2 and 3 of pyruvate and glyceraldehyde 3-phosphate to yield 1-deoxy-D-xylulose-5-phosphate (DXP). This Clostridium perfringens (strain ATCC 13124 / DSM 756 / JCM 1290 / NCIMB 6125 / NCTC 8237 / Type A) protein is 1-deoxy-D-xylulose-5-phosphate synthase.